A 64-amino-acid chain; its full sequence is Large ribosomal subunit protein uL30 (64 aa).

Residues 1-22 form a disordered region; sequence MAKAAKTIKVEQTRSAIRRQHS.

Belongs to the universal ribosomal protein uL30 family. As to quaternary structure, part of the 50S ribosomal subunit.

This is Large ribosomal subunit protein uL30 from Nitrobacter hamburgensis (strain DSM 10229 / NCIMB 13809 / X14).